Consider the following 454-residue polypeptide: Bifunctional protein GlmU (454 aa).

The tract at residues Met1–Arg228 is pyrophosphorylase. UDP-N-acetyl-alpha-D-glucosamine is bound by residues Leu8 to Gly11, Lys22, Gln73, and Gly78 to Thr79. Asp103 is a Mg(2+) binding site. Positions 140, 154, 169, and 226 each coordinate UDP-N-acetyl-alpha-D-glucosamine. Asn226 lines the Mg(2+) pocket. The segment at Ala229 to Asn249 is linker. The tract at residues Gly250–Lys454 is N-acetyltransferase. The UDP-N-acetyl-alpha-D-glucosamine site is built by Arg331 and Lys349. The Proton acceptor role is filled by His361. Residues Tyr364 and Asn375 each contribute to the UDP-N-acetyl-alpha-D-glucosamine site. Acetyl-CoA is bound by residues Asn384–Tyr385, Ala421, and Arg438.

This sequence in the N-terminal section; belongs to the N-acetylglucosamine-1-phosphate uridyltransferase family. In the C-terminal section; belongs to the transferase hexapeptide repeat family. As to quaternary structure, homotrimer. The cofactor is Mg(2+).

The protein resides in the cytoplasm. The enzyme catalyses alpha-D-glucosamine 1-phosphate + acetyl-CoA = N-acetyl-alpha-D-glucosamine 1-phosphate + CoA + H(+). It catalyses the reaction N-acetyl-alpha-D-glucosamine 1-phosphate + UTP + H(+) = UDP-N-acetyl-alpha-D-glucosamine + diphosphate. It participates in nucleotide-sugar biosynthesis; UDP-N-acetyl-alpha-D-glucosamine biosynthesis; N-acetyl-alpha-D-glucosamine 1-phosphate from alpha-D-glucosamine 6-phosphate (route II): step 2/2. It functions in the pathway nucleotide-sugar biosynthesis; UDP-N-acetyl-alpha-D-glucosamine biosynthesis; UDP-N-acetyl-alpha-D-glucosamine from N-acetyl-alpha-D-glucosamine 1-phosphate: step 1/1. The protein operates within bacterial outer membrane biogenesis; LPS lipid A biosynthesis. Functionally, catalyzes the last two sequential reactions in the de novo biosynthetic pathway for UDP-N-acetylglucosamine (UDP-GlcNAc). The C-terminal domain catalyzes the transfer of acetyl group from acetyl coenzyme A to glucosamine-1-phosphate (GlcN-1-P) to produce N-acetylglucosamine-1-phosphate (GlcNAc-1-P), which is converted into UDP-GlcNAc by the transfer of uridine 5-monophosphate (from uridine 5-triphosphate), a reaction catalyzed by the N-terminal domain. This is Bifunctional protein GlmU from Clostridium perfringens (strain ATCC 13124 / DSM 756 / JCM 1290 / NCIMB 6125 / NCTC 8237 / Type A).